A 64-amino-acid chain; its full sequence is Small ribosomal subunit protein eS17 (64 aa).

This sequence belongs to the eukaryotic ribosomal protein eS17 family.

The polypeptide is Small ribosomal subunit protein eS17 (Methanospirillum hungatei JF-1 (strain ATCC 27890 / DSM 864 / NBRC 100397 / JF-1)).